The chain runs to 463 residues: Dialkyldecalin synthase (463 aa).

Residues Val-13, 32-33 (ER), Ile-121, and Asp-275 each bind FAD.

Belongs to the PheA/TfdB FAD monooxygenase family. In terms of assembly, homodimer. Requires FAD as cofactor.

The catalysed reaction is 4-[(2E,7S,8E,10E,13R,14R,16E,18E)-14-ethyl-7,13-dihydroxy-2,16,18-trimethylicosa-2,8,10,16,18-pentaenoyl]-2-methylidene-5-oxo-2,5-dihydro-1H-pyrrol-3-olate = 4-[(1R,2R,4aS,5S,8aR)-2-[(2R,3R,5E,7E)-3-ethyl-2-hydroxy-5,7-dimethylnona-5,7-dien-1-yl]-5-hydroxy-1-methyl-1,2,4a,5,6,7,8,8a-octahydronaphthalene-1-carbonyl]-2-methylidene-5-oxo-2,5-dihydro-1H-pyrrol-3-olate. The protein operates within antibiotic biosynthesis. In terms of biological role, involved in the biosynthesis of the spirotetramate antibiotics pyrroindomycins. Catalyzes the intramolecular cyclization forming the dialkyldecalin moiety in pyrroindomycins, via an endo-selective [4+2] cycloaddition reaction. The polypeptide is Dialkyldecalin synthase (Streptomyces rugosporus).